Reading from the N-terminus, the 480-residue chain is ATP synthase subunit beta (480 aa).

152–159 (GGAGVGKT) serves as a coordination point for ATP.

Belongs to the ATPase alpha/beta chains family. F-type ATPases have 2 components, CF(1) - the catalytic core - and CF(0) - the membrane proton channel. CF(1) has five subunits: alpha(3), beta(3), gamma(1), delta(1), epsilon(1). CF(0) has three main subunits: a(1), b(2) and c(9-12). The alpha and beta chains form an alternating ring which encloses part of the gamma chain. CF(1) is attached to CF(0) by a central stalk formed by the gamma and epsilon chains, while a peripheral stalk is formed by the delta and b chains.

The protein localises to the cell membrane. The enzyme catalyses ATP + H2O + 4 H(+)(in) = ADP + phosphate + 5 H(+)(out). Its function is as follows. Produces ATP from ADP in the presence of a proton gradient across the membrane. The catalytic sites are hosted primarily by the beta subunits. The polypeptide is ATP synthase subunit beta (Wolbachia sp. subsp. Brugia malayi (strain TRS)).